Here is a 461-residue protein sequence, read N- to C-terminus: Elongation factor 1-alpha (461 aa).

Gly-2 carries the post-translational modification N,N,N-trimethylglycine. The 238-residue stretch at 5-242 folds into the tr-type G domain; the sequence is KIHINIVVIG…DAILPPSRPT (238 aa). The interval 14–21 is G1; the sequence is GHVDSGKS. 14-21 provides a ligand contact to GTP; it reads GHVDSGKS. The G2 stretch occupies residues 70–74; it reads GITID. The segment at 91-94 is G3; the sequence is DAPG. Residues 153–156 and 194–196 contribute to the GTP site; these read NKMD and SGW. The tract at residues 153–156 is G4; sequence NKMD. A G5 region spans residues 194–196; it reads SGW. 5-glutamyl glycerylphosphorylethanolamine occurs at positions 301 and 374.

Belongs to the TRAFAC class translation factor GTPase superfamily. Classic translation factor GTPase family. EF-Tu/EF-1A subfamily.

It is found in the cytoplasm. It carries out the reaction GTP + H2O = GDP + phosphate + H(+). Its function is as follows. Translation elongation factor that catalyzes the GTP-dependent binding of aminoacyl-tRNA (aa-tRNA) to the A-site of ribosomes during the elongation phase of protein synthesis. Base pairing between the mRNA codon and the aa-tRNA anticodon promotes GTP hydrolysis, releasing the aa-tRNA from EEF1A1 and allowing its accommodation into the ribosome. The growing protein chain is subsequently transferred from the P-site peptidyl tRNA to the A-site aa-tRNA, extending it by one amino acid through ribosome-catalyzed peptide bond formation. This Oryzias latipes (Japanese rice fish) protein is Elongation factor 1-alpha (eef1a).